The following is a 185-amino-acid chain: Peptidyl-tRNA hydrolase (185 aa).

Tyr-14 is a tRNA binding site. Catalysis depends on His-19, which acts as the Proton acceptor. Residues Tyr-65, Asn-67, and Asn-113 each coordinate tRNA.

It belongs to the PTH family. In terms of assembly, monomer.

It is found in the cytoplasm. The catalysed reaction is an N-acyl-L-alpha-aminoacyl-tRNA + H2O = an N-acyl-L-amino acid + a tRNA + H(+). Functionally, hydrolyzes ribosome-free peptidyl-tRNAs (with 1 or more amino acids incorporated), which drop off the ribosome during protein synthesis, or as a result of ribosome stalling. Its function is as follows. Catalyzes the release of premature peptidyl moieties from peptidyl-tRNA molecules trapped in stalled 50S ribosomal subunits, and thus maintains levels of free tRNAs and 50S ribosomes. The protein is Peptidyl-tRNA hydrolase of Rickettsia felis (strain ATCC VR-1525 / URRWXCal2) (Rickettsia azadi).